The chain runs to 247 residues: Large ribosomal subunit protein uL30 (247 aa).

Methionine 1 carries the post-translational modification N-acetylmethionine. Repeat copies occupy residues 7 to 17, 18 to 29, 30 to 41, and 42 to 53. The segment at 7–53 is 4 X 12 AA tandem repeats; that stretch reads KKKVPAVPETLKKKRRNFAELKIKRLRKKFAQKMLRKARRKLIYEKA. Threonine 16 carries the phosphothreonine modification. Lysine 123 is modified (N6-acetyllysine). Lysine 126 is modified (N6-succinyllysine). Tyrosine 138 is modified (phosphotyrosine).

This sequence belongs to the universal ribosomal protein uL30 family. Component of the large ribosomal subunit. Homodimer. Interacts with DHX33.

It localises to the cytoplasm. In terms of biological role, component of the large ribosomal subunit. The ribosome is a large ribonucleoprotein complex responsible for the synthesis of proteins in the cell. Binds to G-rich structures in 28S rRNA and in mRNAs. Plays a regulatory role in the translation apparatus; inhibits cell-free translation of mRNAs. The protein is Large ribosomal subunit protein uL30 (RPL7) of Macaca fascicularis (Crab-eating macaque).